A 449-amino-acid polypeptide reads, in one-letter code: MYSQQPFPAFAFNAGLMQDPANCHFGGYTGLGHPQPFSFAFSTLKSENGESGVQGMGDCTTPVMPWNSLASFDHQVQMENNQQGNPPRAPSPTLSDSRIKVKEEVVHETDSGEESPEPKYPSPPNPSLYYPNAWTGAPFWQVNPTPGNNINPMPNQTLVKNTSLPGNTTYPTPANQSPNTPVDCVTSSMESSRCSSTNSPNGAINERATTIPNGEMLDGGQSSDNEEEVPSESEMEQFAKDLKHKRVSLGYTQADVGYALGVLYGKMFSQTTICRFESLQLSFKNMCQLKPFLERWVVEAENNDNLQELINREQVIAQTRKRKRRTNIENIVKGTLESYFMKCPKPGAQEMVQIAKELNMDKDVVRVWFCNRRQKGKRQGMPTVEENDGEGYDVAQTMGSPPVGHYALQQVVTPQGYMAAPQIYASAFHKNDLFPQTVPHGMAMGGHIG.

Disordered regions lie at residues 79–125 (ENNQ…SPPN) and 170–233 (YPTP…PSES). Residues 97–110 (SRIKVKEEVVHETD) show a composition bias toward basic and acidic residues. Polar residues predominate over residues 170–180 (YPTPANQSPNT). Positions 187 to 199 (SSMESSRCSSTNS) are enriched in low complexity. Positions 224–233 (DNEEEVPSES) are enriched in acidic residues. Positions 227 to 301 (EEVPSESEME…FLERWVVEAE (75 aa)) constitute a POU-specific domain. The homeobox DNA-binding region spans 321–380 (KRKRRTNIENIVKGTLESYFMKCPKPGAQEMVQIAKELNMDKDVVRVWFCNRRQKGKRQG).

This sequence belongs to the POU transcription factor family. Class-5 subfamily. As to quaternary structure, interacts with components of the transcription complex that assembles on the vent2-B gene, including vent2 (via C-terminus), smad1 and smad4. Forms a repression complex on the promoters of the gsc and mix2 genes via interactions with the nodal/activin signaling pathway transducers foxh1/fast1, gtf2ird1/wbscr11 and smad2. Forms a repression complex on the promoters of the nodal/nr1 and siamois genes with the maternal factors tcf7l1/tcf3 and vegt. In terms of tissue distribution, highly enriched within the animal half of developing embryos within ectodermal and mesodermal regions. Expressed in the neuroectoderm at the early neurula stage, with expression initially extending to the future hindbrain/midbrain boundary, but later shifting toward the posterior pole where it persists within the tip of the tail in hatching embryos. Expressed at very low levels in the adult kidney.

The protein localises to the nucleus. In terms of biological role, transcription factor that binds to the octamer motif (5'-ATTTGCAT-3'). Activates transcription when directly bound to the octamer DNA sequence, but can form repression complexes with other proteins at the promoter site to inhibit transcription. Binds to the promoter of the vent2-B gene to activate transcription when in the presence of other BMP signaling factors also bound to the promoter. Inhibits the competence of ectodermal cells to respond to BMP during embryogenesis thereby inhibiting epidermal differentiation and promoting neural induction. Antagonizes the activity of nodal/activin signaling by forming a transcriptional repression complex on the gsc and mix2 gene promoters to inhibit their transcription, and thus maintain the undifferentiated state of embryonic cells to prevent them from differentiating prematurely. Acts maternally to inhibit vegt and beta-catenin-activated gene transcription by forming a transcriptional repression complex on the nodal/nr1 and siamois promoters to inhibit their transcription. This chain is POU domain, class 5, transcription factor 1.1 (pou5f1.1), found in Xenopus laevis (African clawed frog).